The sequence spans 259 residues: Proteasome subunit alpha (259 aa).

A disordered region spans residues 226–259 (LAEGSATSATSATPGEAEAPATAPEGDVDTGSNG). A compositionally biased stretch (low complexity) spans 227–250 (AEGSATSATSATPGEAEAPATAPE).

The protein belongs to the peptidase T1A family. The 20S proteasome core is composed of 14 alpha and 14 beta subunits that assemble into four stacked heptameric rings, resulting in a barrel-shaped structure. The two inner rings, each composed of seven catalytic beta subunits, are sandwiched by two outer rings, each composed of seven alpha subunits. The catalytic chamber with the active sites is on the inside of the barrel. Has a gated structure, the ends of the cylinder being occluded by the N-termini of the alpha-subunits. Is capped by the proteasome-associated ATPase, ARC.

Its subcellular location is the cytoplasm. It participates in protein degradation; proteasomal Pup-dependent pathway. With respect to regulation, the formation of the proteasomal ATPase ARC-20S proteasome complex, likely via the docking of the C-termini of ARC into the intersubunit pockets in the alpha-rings, may trigger opening of the gate for substrate entry. Interconversion between the open-gate and close-gate conformations leads to a dynamic regulation of the 20S proteasome proteolysis activity. In terms of biological role, component of the proteasome core, a large protease complex with broad specificity involved in protein degradation. This is Proteasome subunit alpha from Streptosporangium roseum (strain ATCC 12428 / DSM 43021 / JCM 3005 / KCTC 9067 / NCIMB 10171 / NRRL 2505 / NI 9100).